Reading from the N-terminus, the 455-residue chain is Exodeoxyribonuclease 7 large subunit (455 aa).

The protein belongs to the XseA family. Heterooligomer composed of large and small subunits.

Its subcellular location is the cytoplasm. The enzyme catalyses Exonucleolytic cleavage in either 5'- to 3'- or 3'- to 5'-direction to yield nucleoside 5'-phosphates.. In terms of biological role, bidirectionally degrades single-stranded DNA into large acid-insoluble oligonucleotides, which are then degraded further into small acid-soluble oligonucleotides. This Escherichia coli O7:K1 (strain IAI39 / ExPEC) protein is Exodeoxyribonuclease 7 large subunit.